Here is a 270-residue protein sequence, read N- to C-terminus: Elongation factor Tu (270 aa).

Residues 1-103 (GILVVSAADG…AVDDYIPTPE (103 aa)) form the tr-type G domain. 35–38 (NKVD) provides a ligand contact to GTP.

The protein belongs to the TRAFAC class translation factor GTPase superfamily. Classic translation factor GTPase family. EF-Tu/EF-1A subfamily. In terms of assembly, monomer.

It localises to the cytoplasm. The catalysed reaction is GTP + H2O = GDP + phosphate + H(+). Functionally, GTP hydrolase that promotes the GTP-dependent binding of aminoacyl-tRNA to the A-site of ribosomes during protein biosynthesis. This chain is Elongation factor Tu (tuf), found in Staphylococcus warneri.